The chain runs to 446 residues: Enolase (446 aa).

Residue S42 participates in Mg(2+) binding. S42 is modified (phosphoserine). A Pentapeptide insert motif is present at residues 104–108; that stretch reads EWGWS. An N6-acetyllysine modification is found at K133. K138 participates in a covalent cross-link: Glycyl lysine isopeptide (Lys-Gly) (interchain with G-Cter in ubiquitin). A Phosphotyrosine modification is found at Y139. Substrate contacts are provided by H166 and E175. The Proton donor role is filled by E218. D253 lines the Mg(2+) pocket. A DKSLVK motif motif is present at residues 277–282; it reads DKSLVK. E304 and D331 together coordinate Mg(2+). Substrate-binding residues include E304 and D331. Position 339 is a phosphothreonine (T339). K356 acts as the Proton acceptor in catalysis. K375 carries the post-translational modification N6-acetyllysine. Residues 383 to 386 and K407 each bind substrate; that span reads SHRS.

This sequence belongs to the enolase family. As to quaternary structure, homodimer. Forms a complex at least composed of DegP, ENO and HSP70. Interacts with G-actin. Interacts (via the DKSLVK motif) with mammalian host PLG/plasminogen (present in the mosquito blood meal); the interaction occurs at the ookinete cell surface and is required for ookinete invasion of the mosquito midgut. Interacts with A.gambiae EBP; depending on the Plasmodium species, the interaction is either involved in ookinete invasion of the mosquito midgut (P.berghei) or is dispensable (P.falciparum). Requires Mg(2+) as cofactor.

It is found in the cytoplasm. Its subcellular location is the nucleus. It localises to the cytoskeleton. The protein resides in the cell surface. The protein localises to the cell membrane. It is found in the vacuole. The catalysed reaction is (2R)-2-phosphoglycerate = phosphoenolpyruvate + H2O. Its pathway is carbohydrate degradation; glycolysis; pyruvate from D-glyceraldehyde 3-phosphate: step 4/5. Its function is as follows. Glycolytic enzyme that catalyzes the conversion of 2-phosphoglycerate to phosphoenolpyruvate. In addition to glycolysis, involved in various processes such as parasite development and invasion. Plays an essential role during ookinete invasion of the mosquito vector midgut by mediating the interaction of the ookinete with the midgut epithelium and, further, by binding to mammalian host plasminogen in the blood meal, whose conversion to active plasmin promotes the invasion process. This Plasmodium falciparum (isolate FCR-3 / Gambia) protein is Enolase.